The chain runs to 245 residues: MYSVDLHMHTVASTHAYSTLHDYIAQAVARGLRLFAITDHGPEMADAPHPWHFMNMRVWPRTVNGVGILRGIEANIKSRQGDIDCHGRMLAEMDVVIAGFHEPVLAPVDRAFHTEALLATIARGEADIISHPGNPKYPLDIPAVARAAAEHGVALELNNSSFSHSRAGSADNCRTIAAAVRDAGGWLSLGSDAHIAFDMGNFNHCIRVLNEVNFPPERVLNASPRRVLDFLQRRGRPVIPEFADW.

Zn(2+)-binding residues include His-7, His-9, His-15, His-40, Glu-73, His-101, His-131, Asp-192, and His-194.

The protein belongs to the PHP family. Homotrimer. Zn(2+) serves as cofactor.

The sequence is that of Probable phosphatase NT01EI_1577 from Edwardsiella ictaluri (strain 93-146).